The sequence spans 400 residues: MAGATVTVEEVRKAQRATGPATVLAIGTATPANCVYQADYPDYYFRITKSEHLTDLKEKFKRMCDKSMIRKRYMHLTEEFLAENPSMCAYMAPSLDARQDVVVVEVPKLGKAAAQKAIKEWGQPKSRITHLVFCTTSGVDMPGADYQLTKALGLRPSVNRLMMYQQGCFAGGTVLRVAKDLAENNRGARVLVVCSEITAVTFRGPSESHLDSLVGQALFGDGAAAVVVGADPDDRVERPLFQLVSAAQTILPDSEGAIDGHLREVGLTFHLLKDVPGLISKNIGRALDDAFKPLGISDWNSIFWVAHPGGPAILDQVEAKVGLDKARMRATRHVLSEYGNMSSACVLFILDEMRKRSAEDGQATTGEGLDWGVLFGFGPGLTVETVVLHSVPITTGAATA.

Cysteine 168 is a catalytic residue.

It belongs to the thiolase-like superfamily. Chalcone/stilbene synthases family.

The catalysed reaction is (E)-4-coumaroyl-CoA + 3 malonyl-CoA + 3 H(+) = 2',4,4',6'-tetrahydroxychalcone + 3 CO2 + 4 CoA. The protein operates within secondary metabolite biosynthesis; flavonoid biosynthesis. The primary product of this enzyme is 4,2',4',6'-tetrahydroxychalcone (also termed naringenin-chalcone or chalcone) which can under specific conditions spontaneously isomerize into naringenin. This Zea mays (Maize) protein is Chalcone synthase C2 (C2).